Reading from the N-terminus, the 230-residue chain is Cytidylate kinase (230 aa).

11–19 (GQSAAGKST) serves as a coordination point for ATP.

It belongs to the cytidylate kinase family. Type 1 subfamily.

Its subcellular location is the cytoplasm. It carries out the reaction CMP + ATP = CDP + ADP. The enzyme catalyses dCMP + ATP = dCDP + ADP. This is Cytidylate kinase from Chloroflexus aggregans (strain MD-66 / DSM 9485).